Reading from the N-terminus, the 418-residue chain is CCA-adding enzyme (418 aa).

ATP contacts are provided by serine 54 and arginine 57. The CTP site is built by serine 54 and arginine 57. Aspartate 66, aspartate 68, and aspartate 118 together coordinate Mg(2+). The ATP site is built by histidine 141, lysine 161, and tyrosine 170. Residues histidine 141, lysine 161, and tyrosine 170 each coordinate CTP.

Belongs to the tRNA nucleotidyltransferase/poly(A) polymerase family. Archaeal CCA-adding enzyme subfamily. As to quaternary structure, homodimer. Mg(2+) serves as cofactor.

The catalysed reaction is a tRNA precursor + 2 CTP + ATP = a tRNA with a 3' CCA end + 3 diphosphate. It catalyses the reaction a tRNA with a 3' CCA end + 2 CTP + ATP = a tRNA with a 3' CCACCA end + 3 diphosphate. In terms of biological role, catalyzes the addition and repair of the essential 3'-terminal CCA sequence in tRNAs without using a nucleic acid template. Adds these three nucleotides in the order of C, C, and A to the tRNA nucleotide-73, using CTP and ATP as substrates and producing inorganic pyrophosphate. tRNA 3'-terminal CCA addition is required both for tRNA processing and repair. Also involved in tRNA surveillance by mediating tandem CCA addition to generate a CCACCA at the 3' terminus of unstable tRNAs. While stable tRNAs receive only 3'-terminal CCA, unstable tRNAs are marked with CCACCA and rapidly degraded. The chain is CCA-adding enzyme from Pyrobaculum islandicum (strain DSM 4184 / JCM 9189 / GEO3).